A 387-amino-acid chain; its full sequence is MAGSEPRSGTNSPPPPFSDWGRLEAAILSGWKTFWQSVSKERVARTTSREEVDEAASTLTRLPIDVQLYILSFLSPHDLCQLGSTNHYWNETVRDPILWRYFLLRDLPSWSSVDWKSLPDLEILKKPISEVTDGAFFDYMAVYRMCCPYTRRASKSSRPMYGAVTSFLHSLIIQNEPRFAMFGPGLEELNTSLVLSLMSSEELCPTAGLPQRQIDGIGSGVNFQLNNQHKFNILILYSTTRKERDRAREEHTSAVNKMFSRHNEGDDQQGSRYSVIPQIQKVCEVVDGFIYVANAEAHKRHEWQDEFSHIMAMTDPAFGSSGRPLLVLSCISQGDVKRMPCFYLAHELHLNLLNHPWLVQDTEAETLTGFLNGIEWILEEVESKRAR.

Phosphoserine is present on residues S12 and S48. The 47-residue stretch at 56–102 (ASTLTRLPIDVQLYILSFLSPHDLCQLGSTNHYWNETVRDPILWRYF) folds into the F-box domain.

Homodimer. Part of the SCF (SKP1-CUL1-F-box) E3 ubiquitin-protein ligase complex SCF(FBXO4) formed of CUL1, SKP1, RBX1 and FBXO4. Interacts with TERF1; this interaction is prevented in the presence of GNL3L. Identified in a complex with CRYAB and CCND1. Phosphorylation at Ser-12 varies during the cell cycle. It is low in resting cells and high in the S phase and the G2/M phase of the cell cycle. Phosphorylation is decreased during late G1 phase. Phosphorylation at Ser-12 promotes homodimerization and is necessary for optimal ubiquitin ligase activity towards CCND1.

The protein localises to the cytoplasm. It functions in the pathway protein modification; protein ubiquitination. Substrate recognition component of a SCF (SKP1-CUL1-F-box protein) E3 ubiquitin-protein ligase complex that mediates the ubiquitination and subsequent proteasomal degradation of target proteins. Promotes ubiquitination of cyclin-D1 (CCND1) and its subsequent proteasomal degradation. However, it does not act as a major regulator of CCND1 stability during the G1/S transition. Recognizes TERF1 and promotes its ubiquitination together with UBE2D1. Promotes ubiquitination of FXR1 following phosphorylation of FXR1 by GSK3B, leading to FXR1 degradation by the proteasome. The sequence is that of F-box only protein 4 (FBXO4) from Homo sapiens (Human).